The sequence spans 428 residues: Gamma-glutamyl phosphate reductase (428 aa).

This sequence belongs to the gamma-glutamyl phosphate reductase family.

The protein resides in the cytoplasm. It catalyses the reaction L-glutamate 5-semialdehyde + phosphate + NADP(+) = L-glutamyl 5-phosphate + NADPH + H(+). Its pathway is amino-acid biosynthesis; L-proline biosynthesis; L-glutamate 5-semialdehyde from L-glutamate: step 2/2. Catalyzes the NADPH-dependent reduction of L-glutamate 5-phosphate into L-glutamate 5-semialdehyde and phosphate. The product spontaneously undergoes cyclization to form 1-pyrroline-5-carboxylate. This is Gamma-glutamyl phosphate reductase from Streptomyces coelicolor (strain ATCC BAA-471 / A3(2) / M145).